The following is a 242-amino-acid chain: Ribosomal RNA large subunit methyltransferase E (242 aa).

Glycine 88, tryptophan 90, aspartate 111, aspartate 127, and aspartate 151 together coordinate S-adenosyl-L-methionine. Lysine 191 (proton acceptor) is an active-site residue.

The protein belongs to the class I-like SAM-binding methyltransferase superfamily. RNA methyltransferase RlmE family.

Its subcellular location is the cytoplasm. The catalysed reaction is uridine(2552) in 23S rRNA + S-adenosyl-L-methionine = 2'-O-methyluridine(2552) in 23S rRNA + S-adenosyl-L-homocysteine + H(+). Functionally, specifically methylates the uridine in position 2552 of 23S rRNA at the 2'-O position of the ribose in the fully assembled 50S ribosomal subunit. The protein is Ribosomal RNA large subunit methyltransferase E of Bartonella tribocorum (strain CIP 105476 / IBS 506).